A 153-amino-acid polypeptide reads, in one-letter code: Arachidonate 5-lipoxygenase-activating protein (153 aa).

The Lumenal segment spans residues 1–8 (MDQETVGN). A helical transmembrane segment spans residues 9 to 30 (IVLLAIVTLISVVQNGFFAHKV). Topologically, residues 31–52 (EHESKTHNGRSFQRTGPLAFER) are cytoplasmic. The helical transmembrane segment at 53-77 (VYTANQNCVDAYPTFLVMLWSAGLL) threads the bilayer. Residues 78–80 (CSQ) are Lumenal-facing. A helical membrane pass occupies residues 81 to 102 (VPAAFAGLMYLFVRQKYFVGYL). The Cytoplasmic portion of the chain corresponds to 103–107 (GERTQ). An intramembrane segment occupies 108–115 (STPGYIFG). Residues 116-128 (KRIILFLFAMSLA) form a helical membrane-spanning segment. Residues 129-153 (GILNYFLIAFFGSDFENYIKTVTTT) are Lumenal-facing.

The protein belongs to the MAPEG family. In terms of assembly, homotrimer. Interacts with LTC4S and ALOX5.

It is found in the nucleus membrane. Its subcellular location is the endoplasmic reticulum membrane. Functionally, required for leukotriene biosynthesis by ALOX5 (5-lipoxygenase). Anchors ALOX5 to the membrane. Binds arachidonic acid, and could play an essential role in the transfer of arachidonic acid to ALOX5. Binds to MK-886, a compound that blocks the biosynthesis of leukotrienes. In Ovis aries (Sheep), this protein is Arachidonate 5-lipoxygenase-activating protein (ALOX5AP).